A 351-amino-acid chain; its full sequence is 4-hydroxy-3-methylbut-2-enyl diphosphate reductase (351 aa).

Cys18 lines the [4Fe-4S] cluster pocket. Positions 47 and 83 each coordinate (2E)-4-hydroxy-3-methylbut-2-enyl diphosphate. Residues His47 and His83 each contribute to the dimethylallyl diphosphate site. Isopentenyl diphosphate is bound by residues His47 and His83. A [4Fe-4S] cluster-binding site is contributed by Cys105. Residue His133 coordinates (2E)-4-hydroxy-3-methylbut-2-enyl diphosphate. Dimethylallyl diphosphate is bound at residue His133. His133 is a binding site for isopentenyl diphosphate. Catalysis depends on Glu135, which acts as the Proton donor. Residue Thr174 participates in (2E)-4-hydroxy-3-methylbut-2-enyl diphosphate binding. Residue Cys204 participates in [4Fe-4S] cluster binding. (2E)-4-hydroxy-3-methylbut-2-enyl diphosphate is bound by residues Ser232, Ser233, Asn234, and Ser277. 4 residues coordinate dimethylallyl diphosphate: Ser232, Ser233, Asn234, and Ser277. Ser232, Ser233, Asn234, and Ser277 together coordinate isopentenyl diphosphate.

It belongs to the IspH family. [4Fe-4S] cluster is required as a cofactor.

It catalyses the reaction isopentenyl diphosphate + 2 oxidized [2Fe-2S]-[ferredoxin] + H2O = (2E)-4-hydroxy-3-methylbut-2-enyl diphosphate + 2 reduced [2Fe-2S]-[ferredoxin] + 2 H(+). It carries out the reaction dimethylallyl diphosphate + 2 oxidized [2Fe-2S]-[ferredoxin] + H2O = (2E)-4-hydroxy-3-methylbut-2-enyl diphosphate + 2 reduced [2Fe-2S]-[ferredoxin] + 2 H(+). It functions in the pathway isoprenoid biosynthesis; dimethylallyl diphosphate biosynthesis; dimethylallyl diphosphate from (2E)-4-hydroxy-3-methylbutenyl diphosphate: step 1/1. The protein operates within isoprenoid biosynthesis; isopentenyl diphosphate biosynthesis via DXP pathway; isopentenyl diphosphate from 1-deoxy-D-xylulose 5-phosphate: step 6/6. In terms of biological role, catalyzes the conversion of 1-hydroxy-2-methyl-2-(E)-butenyl 4-diphosphate (HMBPP) into a mixture of isopentenyl diphosphate (IPP) and dimethylallyl diphosphate (DMAPP). Acts in the terminal step of the DOXP/MEP pathway for isoprenoid precursor biosynthesis. This chain is 4-hydroxy-3-methylbut-2-enyl diphosphate reductase, found in Bartonella tribocorum (strain CIP 105476 / IBS 506).